Reading from the N-terminus, the 669-residue chain is Dymeclin (669 aa).

A lipid anchor (N-myristoyl glycine) is attached at Gly-2.

This sequence belongs to the dymeclin family. As to quaternary structure, interacts with GOLM1 and PPIB. In terms of processing, myristoylated in vitro; myristoylation is not essential for protein targeting to Golgi compartment. In terms of tissue distribution, expressed in most embryo-fetal and adult tissues. Abundant in primary chondrocytes, osteoblasts, cerebellum, kidney, lung, stomach, heart, pancreas and fetal brain. Very low or no expression in the spleen, thymus, esophagus, bladder and thyroid gland.

Its subcellular location is the cytoplasm. It is found in the golgi apparatus. It localises to the membrane. Its function is as follows. Necessary for correct organization of Golgi apparatus. Involved in bone development. The sequence is that of Dymeclin (DYM) from Homo sapiens (Human).